The primary structure comprises 911 residues: Epithelial discoidin domain-containing receptor 1 (911 aa).

A signal peptide spans 1–19 (MGTGTLSSLLLLLLLVTIG). Over 22–415 (DMKGHFDPAK…VAKAEGSPTA (394 aa)) the chain is Extracellular. An F5/8 type C domain is found at 32-186 (CRYALGMQDR…VCLRVELYGC (155 aa)). 2 cysteine pairs are disulfide-bonded: C32/C186 and C75/C178. Positions 193 to 369 (LSYTAPVGQT…LFSEISFISD (177 aa)) are DS-like domain. Positions 213, 232, 235, 237, 255, and 257 each coordinate Ca(2+). N213 carries an N-linked (GlcNAc...) asparagine glycan. N262 carries an N-linked (GlcNAc...) asparagine glycan. An intrachain disulfide couples C305 to C350. Residues S362 and E363 each contribute to the Ca(2+) site. Residues N372 and N392 are each glycosylated (N-linked (GlcNAc...) asparagine). A helical membrane pass occupies residues 416–436 (ILIGCLVAIILLLLLIIALML). Over 437-911 (WRLHWRRLLS…FLADDALNTV (475 aa)) the chain is Cytoplasmic. The tract at residues 468–496 (ILINNRPGPREPPPYQEPRPRGTPPHSAP) is disordered. The span at 477-494 (REPPPYQEPRPRGTPPHS) shows a compositional bias: pro residues. The PPxY motif signature appears at 479-482 (PPPY). Residues Y482, Y511, and Y518 each carry the phosphotyrosine; by autocatalysis modification. Positions 608–903 (LRFKEKLGEG…PPFAQLHRFL (296 aa)) constitute a Protein kinase domain. ATP contacts are provided by residues 614-622 (LGEGQFGEV) and K653. Y738 bears the Phosphotyrosine; by autocatalysis mark. The active-site Proton acceptor is D764. 3 positions are modified to phosphotyrosine; by autocatalysis: Y790, Y794, and Y795.

Belongs to the protein kinase superfamily. Tyr protein kinase family. Insulin receptor subfamily. Homodimer. Interacts (via PPxY motif) with WWC1 (via WW domains) in a collagen-regulated manner. Forms a tripartite complex with WWC1 and PRKCZ, but predominantly in the absence of collagen. Interacts (tyrosine phosphorylated) with SHC1. Interacts with SRC. Interacts with MYH9. Interacts with CDH1. Interacts with PTPN11. Interacts with NCK2. Autophosphorylated in response to fibrillar collagen binding. As to expression, detected in the cochlea and the organ of Corti in the inner ear. Isoform 1 is predominant and is expressed in developing embryo and adult brain. Isoform 2 is expressed in various epithelial cells.

The protein resides in the cell membrane. It carries out the reaction L-tyrosyl-[protein] + ATP = O-phospho-L-tyrosyl-[protein] + ADP + H(+). Functionally, tyrosine kinase that functions as a cell surface receptor for fibrillar collagen and regulates cell attachment to the extracellular matrix, remodeling of the extracellular matrix, cell migration, differentiation, survival and cell proliferation. Collagen binding triggers a signaling pathway that involves SRC and leads to the activation of MAP kinases. Regulates remodeling of the extracellular matrix by up-regulation of the matrix metalloproteinases MMP2, MMP7 and MMP9, and thereby facilitates cell migration and wound healing, but also tumor cell invasion. Promotes smooth muscle cell migration, and thereby contributes to arterial wound healing. Phosphorylates PTPN11. Required for normal blastocyst implantation during pregnancy, for normal mammary gland differentiation and normal lactation. Required for normal ear morphology and normal hearing. The polypeptide is Epithelial discoidin domain-containing receptor 1 (Ddr1) (Mus musculus (Mouse)).